We begin with the raw amino-acid sequence, 648 residues long: DNA ligase (648 aa).

NAD(+) is bound by residues D63–D67 and S105–T106. The active-site N6-AMP-lysine intermediate is the K143. Residues R159, E190, and K302 each contribute to the NAD(+) site. Zn(2+)-binding residues include C390, C393, C406, and C412. The BRCT domain occupies S570 to S648.

Belongs to the NAD-dependent DNA ligase family. LigA subfamily. Mg(2+) serves as cofactor. It depends on Mn(2+) as a cofactor.

The catalysed reaction is NAD(+) + (deoxyribonucleotide)n-3'-hydroxyl + 5'-phospho-(deoxyribonucleotide)m = (deoxyribonucleotide)n+m + AMP + beta-nicotinamide D-nucleotide.. Its function is as follows. DNA ligase that catalyzes the formation of phosphodiester linkages between 5'-phosphoryl and 3'-hydroxyl groups in double-stranded DNA using NAD as a coenzyme and as the energy source for the reaction. It is essential for DNA replication and repair of damaged DNA. The polypeptide is DNA ligase (Shewanella baltica (strain OS155 / ATCC BAA-1091)).